Reading from the N-terminus, the 404-residue chain is Acetate kinase (404 aa).

Residue N7 participates in Mg(2+) binding. Position 14 (K14) interacts with ATP. Residue R91 coordinates substrate. Catalysis depends on D148, which acts as the Proton donor/acceptor. ATP is bound by residues 208–212 (HLGNG) and 283–285 (DLR). Mg(2+) is bound at residue E388.

It belongs to the acetokinase family. Homodimer. Requires Mg(2+) as cofactor. Mn(2+) is required as a cofactor.

The protein localises to the cytoplasm. It catalyses the reaction acetate + ATP = acetyl phosphate + ADP. It participates in metabolic intermediate biosynthesis; acetyl-CoA biosynthesis; acetyl-CoA from acetate: step 1/2. In terms of biological role, catalyzes the formation of acetyl phosphate from acetate and ATP. Can also catalyze the reverse reaction. The sequence is that of Acetate kinase from Borrelia turicatae (strain 91E135).